The sequence spans 288 residues: UAP56-interacting factor (288 aa).

Residues 11–29 carry the UAP56-binding motif motif; it reads TIDKIDMSLDDIIKLNKQE. Residues 183-202 form a disordered region; the sequence is DLPELSKTPPWRTSVSSGGS.

The protein belongs to the UIF family.

The protein localises to the nucleus. It localises to the nucleoplasm. The protein resides in the nucleus speckle. Its function is as follows. Required for mRNA export from the nucleus to the cytoplasm. Acts as an adapter that uses the ddx39b/uap56-nfx1 pathway to ensure efficient mRNA export and delivering to the nuclear pore. This Xenopus laevis (African clawed frog) protein is UAP56-interacting factor (fyttd1).